We begin with the raw amino-acid sequence, 475 residues long: UDP-N-acetylmuramate--L-alanine ligase (475 aa).

112–118 lines the ATP pocket; that stretch reads GTHGKTT.

This sequence belongs to the MurCDEF family.

It localises to the cytoplasm. It catalyses the reaction UDP-N-acetyl-alpha-D-muramate + L-alanine + ATP = UDP-N-acetyl-alpha-D-muramoyl-L-alanine + ADP + phosphate + H(+). Its pathway is cell wall biogenesis; peptidoglycan biosynthesis. In terms of biological role, cell wall formation. This Methylobacillus flagellatus (strain ATCC 51484 / DSM 6875 / VKM B-1610 / KT) protein is UDP-N-acetylmuramate--L-alanine ligase.